Reading from the N-terminus, the 506-residue chain is Nostrin (506 aa).

The region spanning 1–260 (MRDPLTDCPY…AISKIDIEKD (260 aa)) is the F-BAR domain. Serine 114 is modified (phosphoserine). A coiled-coil region spans residues 160–222 (SMTEKEKRKL…LELEKERIQL (63 aa)). The REM-1 domain occupies 292 to 372 (AMDKERRKSL…SYKLSSMLAE (81 aa)). The SH3 domain occupies 438–497 (LSSRLCKALYSFQARQDDELNLEKGDIVIIHEKKEGGWWFGSLNGKKGHFPAAYVEELPS). Serine 479 carries the phosphoserine modification.

In terms of assembly, homotrimer. Interacts with DAB2. Interacts with NOS3, DNM2, WASL and CAV1. Interacts (via SH3 domain) with DNM2; this interaction allows the recruitment of NOS3 to dynamin-positive structures. Expressed at highest levels in heart, kidney, placenta and lung, and at lowest levels in brain, thymus and spleen. Present in vascular endothelial cells and placenta. Over-expressed in placenta from women with pre-eclampsia (at protein level).

It is found in the cell membrane. It localises to the cytoplasmic vesicle. Its subcellular location is the cytoplasm. The protein localises to the cytoskeleton. The protein resides in the nucleus. Functionally, multivalent adapter protein which may decrease NOS3 activity by inducing its translocation away from the plasma membrane. The polypeptide is Nostrin (Homo sapiens (Human)).